The primary structure comprises 108 residues: Large ribosomal subunit protein uL23 (108 aa).

The protein belongs to the universal ribosomal protein uL23 family. Part of the 50S ribosomal subunit. Contacts protein L29, and trigger factor when it is bound to the ribosome.

In terms of biological role, one of the early assembly proteins it binds 23S rRNA. One of the proteins that surrounds the polypeptide exit tunnel on the outside of the ribosome. Forms the main docking site for trigger factor binding to the ribosome. This chain is Large ribosomal subunit protein uL23, found in Polaromonas naphthalenivorans (strain CJ2).